A 126-amino-acid polypeptide reads, in one-letter code: uncharacterized protein (126 aa).

Residues 48–68 traverse the membrane as a helical segment; it reads ILCMFPWQCVVYVFSNFVWLV.

It is found in the membrane. This is an uncharacterized protein from Homo sapiens (Human).